The sequence spans 157 residues: Monooxygenase CPUR_05417 (157 aa).

The protein belongs to the avfA family.

The protein operates within secondary metabolite biosynthesis. Its function is as follows. Monooxygenase; part of the ergochrome gene cluster responsible for the typical purple-black color of the ergot sclerotia. The ergochrome gene cluster produces several ergot pigments including the yellow ergochrome secalonic acid and its derivatives, as well as the red anthraquinones endocrocin and clavorubin. The pathway begins with the synthesis of atrochrysone thioester by the polyketide synthase (PKS) CPUR_05437. The atrochrysone carboxyl ACP thioesterase CPUR_05436 then breaks the thioester bond and releases the atrochrysone carboxylic acid from CPUR_05437. The atrochrysone carboxylic acid is then converted to atrochrysone which is further transformed into emodin anthrone. The next step is performed by the anthrone oxygenase CPUR_05434 that catalyzes the oxidation of emodinanthrone to emodin. Emodin is further modified to yield monodictyphenone via several steps involving CPUR_05427, CPUR_05428, CPUR_05429 and CPUR_05430. The short chain dehydrogenase/reductase CPUR_05418 then catalyzes the C-5 ketoreduction to give the xanthone skeleton of the monomeric units. Ergochromes formation requires further dimerization steps of different xanthone units, probably catalyzed by the cytochrome P450 monooxygenase CPUR_05419. CPUR_05425, CPUR_05426 and CPUR_05431 are unique to Claviceps, thus it is likely that they are involved in further modification of xanthone units or in their dimerization. The yellow ergochromes and the red anthraquinone pigments endocrocin and clavorubin are products from the same PKS derived precursors and the latter are likely shunt products in the pathway of xanthone biosynthesis. It is proposed that atrochrysone carboxylic acid released from the PKS CPUR_05437 can also be converted to endocrocin anthrone which is further oxidized into endocrocin by CPUR_05435. Endocrocin could be then modified to clavorubin, possibly by CPUR_05423 and CPUR_05431. Clavorubin is the principal anthraquinone metabolite produced by the cluster with a much higher yield compared to endocrocin. This Claviceps purpurea (strain 20.1) (Ergot fungus) protein is Monooxygenase CPUR_05417.